The sequence spans 922 residues: Isoleucine--tRNA ligase (922 aa).

A 'HIGH' region motif is present at residues 58 to 68; that stretch reads PYANGDIHIGH. Glu-552 lines the L-isoleucyl-5'-AMP pocket. Positions 593-597 match the 'KMSKS' region motif; it reads KMSKS. An ATP-binding site is contributed by Lys-596. The Zn(2+) site is built by Cys-885, Cys-888, Cys-905, and Cys-908.

The protein belongs to the class-I aminoacyl-tRNA synthetase family. IleS type 1 subfamily. In terms of assembly, monomer. Zn(2+) serves as cofactor.

The protein resides in the cytoplasm. It carries out the reaction tRNA(Ile) + L-isoleucine + ATP = L-isoleucyl-tRNA(Ile) + AMP + diphosphate. In terms of biological role, catalyzes the attachment of isoleucine to tRNA(Ile). As IleRS can inadvertently accommodate and process structurally similar amino acids such as valine, to avoid such errors it has two additional distinct tRNA(Ile)-dependent editing activities. One activity is designated as 'pretransfer' editing and involves the hydrolysis of activated Val-AMP. The other activity is designated 'posttransfer' editing and involves deacylation of mischarged Val-tRNA(Ile). The polypeptide is Isoleucine--tRNA ligase (Ruthia magnifica subsp. Calyptogena magnifica).